Consider the following 218-residue polypeptide: Small ribosomal subunit protein mS34 (218 aa).

The protein belongs to the mitochondrion-specific ribosomal protein mS34 family. Component of the mitochondrial ribosome small subunit (28S) which comprises a 12S rRNA and about 30 distinct proteins. Widely expressed (at protein liver).

Its subcellular location is the mitochondrion. Its function is as follows. Required for mitochondrial translation, plays a role in maintaining the stability of the small ribosomal subunit and the 12S rRNA that are required for mitoribosome formation. The sequence is that of Small ribosomal subunit protein mS34 (Mrps34) from Mus musculus (Mouse).